We begin with the raw amino-acid sequence, 606 residues long: R-linalool synthase, chloroplastic (606 aa).

Residues 1 to 51 (MCTIISVNHHHVAILSKPKVKLFHTKNKRSASINLPWSLSPSSSAASRPIS) constitute a chloroplast transit peptide. Residues Arg-326, Asp-363, Asp-367, Arg-504, and Asp-507 each contribute to the (2E)-geranyl diphosphate site. Mg(2+) contacts are provided by Asp-363 and Asp-367. The short motif at 363 to 367 (DDVYD) is the DDXXD motif element. 3 residues coordinate Mg(2+): Asp-507, Thr-511, and Glu-515.

It belongs to the terpene synthase family. Tpsb subfamily. The cofactor is Mg(2+). Requires Mn(2+) as cofactor.

The protein localises to the plastid. Its subcellular location is the chloroplast. The catalysed reaction is (2E)-geranyl diphosphate + H2O = (R)-linalool + diphosphate. It functions in the pathway secondary metabolite biosynthesis; terpenoid biosynthesis. Functionally, monoterpene synthase that catalyzes the formation of (3R)-linalool from geranyl diphosphate, but not from farnesyl diphosphate or geranylgeranyl diphosphate. This chain is R-linalool synthase, chloroplastic, found in Mentha aquatica (Water mint).